The following is a 298-amino-acid chain: Protoheme IX farnesyltransferase (298 aa).

Transmembrane regions (helical) follow at residues 26–46 (IVILLLITGFAAMWVAAGGPP), 48–68 (LGLTVVTMIGLALSCGAANAI), 110–130 (FLVLLTVNLLTALLATAGLLF), 147–167 (IVIGGAAGAAPPLVGWAAVTG), 174–194 (VIMFLVVFLWTPPHFWALALF), 220–240 (ILLYSLLLIPSAALLYWTGTV), 243–263 (LYLWTSVVLGCAMVSASVGLL), and 276–296 (TYGWSLLYLFVIFLAMMLDVT).

It belongs to the UbiA prenyltransferase family. Protoheme IX farnesyltransferase subfamily. In terms of assembly, interacts with CtaA.

It is found in the cell membrane. It catalyses the reaction heme b + (2E,6E)-farnesyl diphosphate + H2O = Fe(II)-heme o + diphosphate. The protein operates within porphyrin-containing compound metabolism; heme O biosynthesis; heme O from protoheme: step 1/1. Converts heme B (protoheme IX) to heme O by substitution of the vinyl group on carbon 2 of heme B porphyrin ring with a hydroxyethyl farnesyl side group. This Symbiobacterium thermophilum (strain DSM 24528 / JCM 14929 / IAM 14863 / T) protein is Protoheme IX farnesyltransferase.